Here is a 109-residue protein sequence, read N- to C-terminus: Period circadian protein (109 aa).

A disordered region spans residues 59-109 (CFEGSGGSGSSGNFTSGSNLNMRSVTNTSNTGTGTSSESVPLVTLTEALIS). A compositionally biased stretch (low complexity) spans 69-98 (SGNFTSGSNLNMRSVTNTSNTGTGTSSESV).

Forms a heterodimer with timeless (TIM); the complex then translocates into the nucleus. In terms of processing, phosphorylated with a circadian rhythmicity, probably by the double-time protein (dbt). Phosphorylation could be implicated in the stability of per monomer and in the formation of heterodimer per-tim.

The protein localises to the nucleus. Its subcellular location is the cytoplasm. The protein resides in the perinuclear region. Essential for biological clock functions. Determines the period length of circadian and ultradian rhythms; an increase in PER dosage leads to shortened circadian rhythms and a decrease leads to lengthened circadian rhythms. Essential for the circadian rhythmicity of locomotor activity, eclosion behavior, and for the rhythmic component of the male courtship song that originates in the thoracic nervous system. The biological cycle depends on the rhythmic formation and nuclear localization of the TIM-PER complex. Light induces the degradation of TIM, which promotes elimination of PER. Nuclear activity of the heterodimer coordinatively regulates PER and TIM transcription through a negative feedback loop. Behaves as a negative element in circadian transcriptional loop. Does not appear to bind DNA, suggesting indirect transcriptional inhibition. This Syritta pipiens (Hoverfly) protein is Period circadian protein (per).